The sequence spans 127 residues: Acetylcholine receptor subunit alpha (127 aa).

The Extracellular portion of the chain corresponds to 1–127 (ADGIFAIDQF…YFIVNVIIPC (127 aa)). An intrachain disulfide couples cysteine 33 to cysteine 47. N-linked (GlcNAc...) asparagine glycosylation is found at asparagine 46 and asparagine 94. Cysteines 97 and 98 form a disulfide.

Belongs to the ligand-gated ion channel (TC 1.A.9) family. Acetylcholine receptor (TC 1.A.9.1) subfamily. Alpha-1/CHRNA1 sub-subfamily. In terms of assembly, one of the alpha chains that assemble within the acetylcholine receptor, a pentamer of two alpha chains, a beta, a delta, and a gamma or epsilon chains.

It is found in the postsynaptic cell membrane. The protein localises to the cell membrane. The enzyme catalyses K(+)(in) = K(+)(out). The catalysed reaction is Na(+)(in) = Na(+)(out). In terms of biological role, upon acetylcholine binding, the AChR responds by an extensive change in conformation that affects all subunits and leads to opening of an ion-conducting channel across the plasma membrane. Does not bind alpha-bungarotoxin. In Natrix tessellata (Dice snake), this protein is Acetylcholine receptor subunit alpha (CHRNA1).